A 427-amino-acid chain; its full sequence is Serine protease HTRA2, mitochondrial (427 aa).

Positions 33–55 (HTASSSKGSGGDNSKDKENNGQN) are disordered. The helical transmembrane segment at 66 to 86 (SAFQFCVPFSLGALVSAVLIE) threads the bilayer. The short motif at 78 to 81 (ALVS) is the IAP-binding element. The segment at 144–307 (SNGSGFVIEQ…IPIDYVKVFL (164 aa)) is serine protease. Residues histidine 162, aspartate 194, and serine 271 each act as charge relay system in the active site. The 86-residue stretch at 330 to 415 (MGITMLTLTP…DLEIVILRGV (86 aa)) folds into the PDZ domain.

This sequence belongs to the peptidase S1C family. As to quaternary structure, interacts with th/DIAP1 (via BIR 2 domain).

The protein localises to the mitochondrion intermembrane space. Its subcellular location is the mitochondrion membrane. It carries out the reaction Cleavage of non-polar aliphatic amino-acids at the P1 position, with a preference for Val, Ile and Met. At the P2 and P3 positions, Arg is selected most strongly with a secondary preference for other hydrophilic residues.. Serine protease that shows proteolytic activity against a non-specific substrate beta-casein. Promotes or induces cell death either by direct binding to and inhibition of BIRC proteins (also called inhibitor of apoptosis proteins, IAPs), leading to an increase in caspase activity, or by a BIRC inhibition-independent, caspase-independent and serine protease activity-dependent mechanism. Can antagonize antiapoptotic activity of th/Diap1 by directly inducing the degradation of th/Diap1. This Drosophila pseudoobscura pseudoobscura (Fruit fly) protein is Serine protease HTRA2, mitochondrial.